The sequence spans 194 residues: MNFAALILAGGSSRRMGQDKALLRLNGEPLLIRTSRIAAAVCDSVWICSPEPDRYQSLLSQPVQWLTEPQPTGPQGPLTALAWALPQIDADWILLLACDLPRLAIAPLQAWRQQVELLPEDCRAAIARTEQGWEPLIGFYRPAIAPTIAPWLSQGRRDFQGWLATVAVQELPLSDRDWLVNCNTPTDWQALQLS.

Residues 8–10 (LAG), K20, and D99 contribute to the GTP site. A Mg(2+)-binding site is contributed by D99.

Belongs to the MobA family. Mg(2+) is required as a cofactor.

The protein localises to the cytoplasm. It carries out the reaction Mo-molybdopterin + GTP + H(+) = Mo-molybdopterin guanine dinucleotide + diphosphate. Its function is as follows. Transfers a GMP moiety from GTP to Mo-molybdopterin (Mo-MPT) cofactor (Moco or molybdenum cofactor) to form Mo-molybdopterin guanine dinucleotide (Mo-MGD) cofactor. The protein is Probable molybdenum cofactor guanylyltransferase of Synechococcus elongatus (strain ATCC 33912 / PCC 7942 / FACHB-805) (Anacystis nidulans R2).